A 102-amino-acid chain; its full sequence is Small ribosomal subunit protein uS10 (102 aa).

Belongs to the universal ribosomal protein uS10 family. As to quaternary structure, part of the 30S ribosomal subunit.

Functionally, involved in the binding of tRNA to the ribosomes. The chain is Small ribosomal subunit protein uS10 from Methylocella silvestris (strain DSM 15510 / CIP 108128 / LMG 27833 / NCIMB 13906 / BL2).